Reading from the N-terminus, the 483-residue chain is Altronate oxidoreductase (483 aa).

NAD(+) is bound at residue 18 to 29 (IIQFGEGNFLRA).

This sequence belongs to the mannitol dehydrogenase family. UxaB subfamily.

It catalyses the reaction D-altronate + NAD(+) = keto-D-tagaturonate + NADH + H(+). The protein operates within carbohydrate metabolism; pentose and glucuronate interconversion. This chain is Altronate oxidoreductase, found in Yersinia enterocolitica serotype O:8 / biotype 1B (strain NCTC 13174 / 8081).